Reading from the N-terminus, the 457-residue chain is Bifunctional protein GlmU (457 aa).

Residues 1–229 (MYNCAIILAA…YEEIMGVNSR (229 aa)) are pyrophosphorylase. UDP-N-acetyl-alpha-D-glucosamine contacts are provided by residues 8 to 11 (LAAG), lysine 22, glutamine 73, and 78 to 79 (GT). Aspartate 103 serves as a coordination point for Mg(2+). 4 residues coordinate UDP-N-acetyl-alpha-D-glucosamine: glycine 140, glutamate 155, asparagine 170, and asparagine 227. Asparagine 227 serves as a coordination point for Mg(2+). The linker stretch occupies residues 230 to 250 (VQLSEAEIVMRKRINHKHMVN). The tract at residues 251 to 457 (GVTFIDCEST…WLDKKGLLKK (207 aa)) is N-acetyltransferase. Arginine 332 and lysine 350 together coordinate UDP-N-acetyl-alpha-D-glucosamine. Histidine 362 (proton acceptor) is an active-site residue. UDP-N-acetyl-alpha-D-glucosamine-binding residues include tyrosine 365 and asparagine 376. Acetyl-CoA-binding positions include 385–386 (NY), alanine 422, and arginine 439.

In the N-terminal section; belongs to the N-acetylglucosamine-1-phosphate uridyltransferase family. This sequence in the C-terminal section; belongs to the transferase hexapeptide repeat family. As to quaternary structure, homotrimer. The cofactor is Mg(2+).

It is found in the cytoplasm. The catalysed reaction is alpha-D-glucosamine 1-phosphate + acetyl-CoA = N-acetyl-alpha-D-glucosamine 1-phosphate + CoA + H(+). It carries out the reaction N-acetyl-alpha-D-glucosamine 1-phosphate + UTP + H(+) = UDP-N-acetyl-alpha-D-glucosamine + diphosphate. Its pathway is nucleotide-sugar biosynthesis; UDP-N-acetyl-alpha-D-glucosamine biosynthesis; N-acetyl-alpha-D-glucosamine 1-phosphate from alpha-D-glucosamine 6-phosphate (route II): step 2/2. The protein operates within nucleotide-sugar biosynthesis; UDP-N-acetyl-alpha-D-glucosamine biosynthesis; UDP-N-acetyl-alpha-D-glucosamine from N-acetyl-alpha-D-glucosamine 1-phosphate: step 1/1. It participates in bacterial outer membrane biogenesis; LPS lipid A biosynthesis. Its function is as follows. Catalyzes the last two sequential reactions in the de novo biosynthetic pathway for UDP-N-acetylglucosamine (UDP-GlcNAc). The C-terminal domain catalyzes the transfer of acetyl group from acetyl coenzyme A to glucosamine-1-phosphate (GlcN-1-P) to produce N-acetylglucosamine-1-phosphate (GlcNAc-1-P), which is converted into UDP-GlcNAc by the transfer of uridine 5-monophosphate (from uridine 5-triphosphate), a reaction catalyzed by the N-terminal domain. The chain is Bifunctional protein GlmU from Clostridium botulinum (strain Loch Maree / Type A3).